The primary structure comprises 463 residues: Probable diacyglycerol O-acyltransferase tgs1 (463 aa).

His137 functions as the Proton acceptor in the catalytic mechanism.

This sequence belongs to the long-chain O-acyltransferase family.

The enzyme catalyses an acyl-CoA + a 1,2-diacyl-sn-glycerol = a triacyl-sn-glycerol + CoA. The protein operates within glycerolipid metabolism; triacylglycerol biosynthesis. Functionally, catalyzes the terminal and only committed step in triacylglycerol synthesis by using diacylglycerol and fatty acyl CoA as substrates. Required for storage lipid synthesis. The chain is Probable diacyglycerol O-acyltransferase tgs1 (tgs1) from Mycobacterium tuberculosis (strain CDC 1551 / Oshkosh).